A 798-amino-acid chain; its full sequence is MGKKRIYELAKEMNKASKDVVDKAHQLGMDVKNHMGAISSEQETKLRQAFGGGSTVNTQSKATNNQKQQTTQNKPANKKPMNNKPGEQRNNQNRPNNQSTNGQQRNNNNQNRHGQSNTQNRSNQTNTNNQNRNTQNNNGSTTNQNRTSQNNNGGNNQNRGGQNRNNNFGGGQNRNNRNNFNNQNRNRFNKKGKKGKHQQESAKPAVPARKFRELPDVLEYTEGMNVADIAKKIHREPAEIIKKLFMMGVMVNQNQALDKDTIELLAVDYGMEPQEKVQVDIADIDKFFEPEAVVEENLTTRPPVVTIMGHVDHGKTTLLDTLRHSRVTSGEAGGITQHIGAYQLDIDGKPITFLDTPGHAAFTSMRARGASITDITILVVAADDGVMPQTIEAINHAKAAKVPIIVAVNKIDKPGANPDHVKQELSEHELIPEEWGGDTIFVNISAKFNQNIDELLENILLIAEVEDLKADPTQKAIGTVIEARLDKGKGPVATLLVQQGTLHVGDPIVVGNTYGRVRVMTNDMGRRDKEAGPATPVEITGLNDVPQAGDRFVVFEDEKTARQAGEERAKRALLEQRSASSRVTLDNLFESLKEGELKEVNIIVKADVQGSAEAVSASLQKIDVEGVRVKIVHAAVGAINESDVTLAAASNAIIIGFNVRPTPQAKQQAEQEEVDIRLHRIIYKALEEIETAMKGLLDPEFEEKITGQMTVRELYKVSKVGTIAGCYVTEGFIRRDSGVRVIRDGIVIYEGKLASLKRFKDDVKEVKLGFECGAMIENFNDLRVDDAIEGFIMEEIKQ.

Residues 40–207 (SEQETKLRQA…QQESAKPAVP (168 aa)) form a disordered region. Residues 57 to 186 (NTQSKATNNQ…RNNFNNQNRN (130 aa)) show a composition bias toward low complexity. Residues 187 to 196 (RFNKKGKKGK) show a composition bias toward basic residues. The region spanning 300 to 469 (TRPPVVTIMG…LLIAEVEDLK (170 aa)) is the tr-type G domain. The tract at residues 309–316 (GHVDHGKT) is G1. 309 to 316 (GHVDHGKT) is a binding site for GTP. A G2 region spans residues 334-338 (GITQH). The segment at 355–358 (DTPG) is G3. GTP is bound by residues 355-359 (DTPGH) and 409-412 (NKID). Residues 409–412 (NKID) form a G4 region. Residues 445–447 (SAK) form a G5 region.

This sequence belongs to the TRAFAC class translation factor GTPase superfamily. Classic translation factor GTPase family. IF-2 subfamily.

It localises to the cytoplasm. In terms of biological role, one of the essential components for the initiation of protein synthesis. Protects formylmethionyl-tRNA from spontaneous hydrolysis and promotes its binding to the 30S ribosomal subunits. Also involved in the hydrolysis of GTP during the formation of the 70S ribosomal complex. This Enterococcus faecalis (strain ATCC 700802 / V583) protein is Translation initiation factor IF-2.